The sequence spans 111 residues: Notch-regulated ankyrin repeat-containing protein B (111 aa).

2 ANK repeats span residues 47-76 (EGQT…DTRL) and 80-109 (DGWS…YSSS).

Belongs to the NRARP family.

Functionally, regulates independently canonical Wnt and Notch signaling by modulating LEF1 and Notch protein turnover. Stabilizes LEF1, a pivotal transcription factor in the Wnt signaling cascade, by blocking its ubiquitination. Involved in angiogenesis; involved in intersegmental vessel patterning during development. The protein is Notch-regulated ankyrin repeat-containing protein B (nrarpb) of Danio rerio (Zebrafish).